The following is a 94-amino-acid chain: Integration host factor subunit beta (94 aa).

It belongs to the bacterial histone-like protein family. Heterodimer of an alpha and a beta chain.

In terms of biological role, this protein is one of the two subunits of integration host factor, a specific DNA-binding protein that functions in genetic recombination as well as in transcriptional and translational control. This is Integration host factor subunit beta from Histophilus somni (strain 129Pt) (Haemophilus somnus).